The primary structure comprises 429 residues: Mannose-6-phosphate isomerase (429 aa).

Zn(2+)-binding residues include Gln110, His112, Glu137, and His282. The active site involves Arg301.

Belongs to the mannose-6-phosphate isomerase type 1 family. Requires Zn(2+) as cofactor.

Its subcellular location is the cytoplasm. It catalyses the reaction D-mannose 6-phosphate = D-fructose 6-phosphate. It functions in the pathway nucleotide-sugar biosynthesis; GDP-alpha-D-mannose biosynthesis; alpha-D-mannose 1-phosphate from D-fructose 6-phosphate: step 1/2. In terms of biological role, involved in the synthesis of the GDP-mannose and dolichol-phosphate-mannose required for a number of critical mannosyl transfer reactions. This Candida glabrata (strain ATCC 2001 / BCRC 20586 / JCM 3761 / NBRC 0622 / NRRL Y-65 / CBS 138) (Yeast) protein is Mannose-6-phosphate isomerase (PMI1).